The chain runs to 327 residues: DNA-directed RNA polymerase subunit alpha (327 aa).

The segment at 1-231 is alpha N-terminal domain (alpha-NTD); the sequence is MIYQMQMPAK…DHVTFFANFS (231 aa). Residues 252 to 327 are alpha C-terminal domain (alpha-CTD); it reads MRRLFHTKIE…GMDITKYQMK (76 aa).

Belongs to the RNA polymerase alpha chain family. In terms of assembly, homodimer. The RNAP catalytic core consists of 2 alpha, 1 beta, 1 beta' and 1 omega subunit. When a sigma factor is associated with the core the holoenzyme is formed, which can initiate transcription.

The enzyme catalyses RNA(n) + a ribonucleoside 5'-triphosphate = RNA(n+1) + diphosphate. Its function is as follows. DNA-dependent RNA polymerase catalyzes the transcription of DNA into RNA using the four ribonucleoside triphosphates as substrates. The polypeptide is DNA-directed RNA polymerase subunit alpha (Pelodictyon phaeoclathratiforme (strain DSM 5477 / BU-1)).